The chain runs to 859 residues: Leucine--tRNA ligase (859 aa).

The short motif at 42–52 is the 'HIGH' region element; it reads PYPSGRLHMGH. Residues 618 to 622 carry the 'KMSKS' region motif; sequence KMSKS. ATP is bound at residue lysine 621.

Belongs to the class-I aminoacyl-tRNA synthetase family.

The protein localises to the cytoplasm. The catalysed reaction is tRNA(Leu) + L-leucine + ATP = L-leucyl-tRNA(Leu) + AMP + diphosphate. This chain is Leucine--tRNA ligase, found in Shewanella sp. (strain ANA-3).